A 548-amino-acid polypeptide reads, in one-letter code: Mercuric reductase (548 aa).

An HMA domain is found at 1 to 65 (MTEITVNGMT…AIAALGYQGS (65 aa)). The a metal cation site is built by cysteine 11 and cysteine 14. FAD-binding residues include alanine 97, glycine 117, and threonine 122. Cysteines 123 and 128 form a disulfide. Residues lysine 132, alanine 198, aspartate 390, and valine 398 each contribute to the FAD site. Hg(2+)-binding residues include cysteine 545 and cysteine 546.

It belongs to the class-I pyridine nucleotide-disulfide oxidoreductase family. Homodimer. Requires FAD as cofactor.

The catalysed reaction is Hg + NADP(+) + H(+) = Hg(2+) + NADPH. Functionally, resistance to Hg(2+) in bacteria appears to be governed by a specialized system which includes mercuric reductase. MerA protein is responsible for volatilizing mercury as Hg(0). This chain is Mercuric reductase (merA), found in Pseudomonas fluorescens.